Reading from the N-terminus, the 520-residue chain is Zinc finger and BTB domain-containing protein 45 (520 aa).

One can recognise a BTB domain in the interval 33–96; sequence CDVTVRIREA…LYSGSLVVAQ (64 aa). Disordered stretches follow at residues 182–272 and 337–372; these read PAPP…GGAG and FHLG…PDAA. Positions 206 to 225 are enriched in acidic residues; it reads RGEEDDDEETDEETDAEEGE. The span at 342–363 shows a compositional bias: pro residues; it reads PGPPAPTPPTPSGPAPAPPPTF. 4 C2H2-type zinc fingers span residues 412 to 434, 440 to 462, 468 to 490, and 495 to 517; these read YECS…MFIH, HQCA…MVTH, FQCA…MRTH, and APCP…LAAH.

Belongs to the krueppel C2H2-type zinc-finger protein family.

The protein localises to the nucleus. In terms of biological role, may be involved in transcriptional regulation. In the central nervous system, may play a role in glial cell differentiation. This Mus musculus (Mouse) protein is Zinc finger and BTB domain-containing protein 45.